We begin with the raw amino-acid sequence, 87 residues long: uncharacterized protein (87 aa).

It to A.fulgidus AF_1348 and AF_1363.

This is an uncharacterized protein from Archaeoglobus fulgidus (strain ATCC 49558 / DSM 4304 / JCM 9628 / NBRC 100126 / VC-16).